The sequence spans 185 residues: Threonylcarbamoyl-AMP synthase (185 aa).

Positions 1 to 185 (MKNFEQVLKA…AKTSQILRQG (185 aa)) constitute a YrdC-like domain. The disordered stretch occupies residues 163-185 (ETSGRNKPSEIRDAKTSQILRQG). Basic and acidic residues predominate over residues 164–177 (TSGRNKPSEIRDAK).

Belongs to the SUA5 family. TsaC subfamily.

The protein resides in the cytoplasm. It carries out the reaction L-threonine + hydrogencarbonate + ATP = L-threonylcarbamoyladenylate + diphosphate + H2O. Functionally, required for the formation of a threonylcarbamoyl group on adenosine at position 37 (t(6)A37) in tRNAs that read codons beginning with adenine. Catalyzes the conversion of L-threonine, HCO(3)(-)/CO(2) and ATP to give threonylcarbamoyl-AMP (TC-AMP) as the acyladenylate intermediate, with the release of diphosphate. The chain is Threonylcarbamoyl-AMP synthase from Vibrio campbellii (strain ATCC BAA-1116).